Here is a 122-residue protein sequence, read N- to C-terminus: NADH-quinone oxidoreductase subunit A (122 aa).

3 helical membrane-spanning segments follow: residues 10–30 (MIVL…LTLG), 66–86 (IFAL…PWAV), and 91–111 (LGLF…VGLA).

It belongs to the complex I subunit 3 family. In terms of assembly, NDH-1 is composed of 14 different subunits. Subunits NuoA, H, J, K, L, M, N constitute the membrane sector of the complex.

Its subcellular location is the cell membrane. The catalysed reaction is a quinone + NADH + 5 H(+)(in) = a quinol + NAD(+) + 4 H(+)(out). Functionally, NDH-1 shuttles electrons from NADH, via FMN and iron-sulfur (Fe-S) centers, to quinones in the respiratory chain. The immediate electron acceptor for the enzyme in this species is believed to be a menaquinone. Couples the redox reaction to proton translocation (for every two electrons transferred, four hydrogen ions are translocated across the cytoplasmic membrane), and thus conserves the redox energy in a proton gradient. This chain is NADH-quinone oxidoreductase subunit A, found in Bacillus mycoides (strain KBAB4) (Bacillus weihenstephanensis).